A 263-amino-acid polypeptide reads, in one-letter code: Energy-coupling factor transporter transmembrane protein EcfT (263 aa).

The next 4 membrane-spanning stretches (helical) occupy residues 22 to 42 (IIFAFCFIPLVFLANNAATNI), 69 to 89 (ILFLIIFTFIIQLLFTREGAV), 105 to 125 (LAIIVSLRFFYLVSITTLVTL), and 243 to 263 (TGLILLLVALGLLLVYLRGGF).

It belongs to the energy-coupling factor EcfT family. Forms a stable energy-coupling factor (ECF) transporter complex composed of 2 membrane-embedded substrate-binding proteins (S component), 2 ATP-binding proteins (A component) and 2 transmembrane proteins (T component). May be able to interact with more than 1 S component at a time.

Its subcellular location is the cell membrane. Functionally, transmembrane (T) component of an energy-coupling factor (ECF) ABC-transporter complex. Unlike classic ABC transporters this ECF transporter provides the energy necessary to transport a number of different substrates. The polypeptide is Energy-coupling factor transporter transmembrane protein EcfT (Exiguobacterium sibiricum (strain DSM 17290 / CCUG 55495 / CIP 109462 / JCM 13490 / 255-15)).